The primary structure comprises 256 residues: 6-carboxyhexanoate--CoA ligase (256 aa).

The protein belongs to the BioW family. In terms of assembly, homodimer. The cofactor is Mg(2+).

The enzyme catalyses heptanedioate + ATP + CoA = 6-carboxyhexanoyl-CoA + AMP + diphosphate. It participates in metabolic intermediate metabolism; pimeloyl-CoA biosynthesis; pimeloyl-CoA from pimelate: step 1/1. In terms of biological role, catalyzes the transformation of pimelate into pimeloyl-CoA with concomitant hydrolysis of ATP to AMP. This chain is 6-carboxyhexanoate--CoA ligase, found in Methanobrevibacter ruminantium (strain ATCC 35063 / DSM 1093 / JCM 13430 / OCM 146 / M1) (Methanobacterium ruminantium).